Consider the following 1256-residue polypeptide: N-acetylglucosamine-1-phosphotransferase subunits alpha/beta (1256 aa).

Residues 22-42 traverse the membrane as a helical segment; the sequence is VCFLGVVVTIVSAFQFGEVVL. N-linked (GlcNAc...) asparagine glycans are attached at residues Asn-83, Asn-114, Asn-148, Asn-179, and Asn-250. Cystine bridges form between Cys-438–Cys-461, Cys-452–Cys-468, Cys-505–Cys-528, and Cys-519–Cys-535. LNR repeat units lie at residues 438 to 473 and 505 to 545; these read CAEG…GNSG and CNQG…ELYK. Ca(2+) contacts are provided by Asp-449, Asp-464, Asp-467, Asp-516, Asp-531, and Asp-534. Residues Asn-614, Asn-699, Asn-729, Asn-829, and Asn-1009 are each glycosylated (N-linked (GlcNAc...) asparagine). The DMAP1-binding domain maps to 699–798; sequence NISLLPKDAQ…TFPAVSVKVN (100 aa). The 36-residue stretch at 1005-1040 folds into the EF-hand domain; that stretch reads VQPLNISQVFDEVDTDQSGVLSDREIRTLATRIHEL. Residues Asp-1018, Asp-1020, Ser-1022, and Glu-1029 each coordinate Ca(2+). Asn-1129 is a glycosylation site (N-linked (GlcNAc...) asparagine). The helical transmembrane segment at 1215–1235 threads the bilayer; it reads VLATLIMFTIFSFFAEQLIAL.

This sequence belongs to the stealth family. In terms of assembly, hexamer of two alpha, two beta and two gamma (GNPTG) subunits; disulfide-linked. The alpha and/or the beta subunits of the enzyme constitute the catalytic subunits. Interacts with LYSET; facilitates proper localization of GNPTAB. Post-translationally, the alpha- and beta-subunits are generated by a proteolytic cleavage by MBTPS1 protease at the Lys-928-Asp-929 bond. As to expression, expressed in the heart, whole brain, placenta, lung, liver, skeletal muscle, kidney and pancreas.

It localises to the golgi apparatus membrane. It carries out the reaction N(4)-[alpha-D-mannosyl-(1-&gt;2)-alpha-D-mannosyl-(glycan)]-L-asparaginyl-[protein] + UDP-N-acetyl-alpha-D-glucosamine = N(4)-[6-(N-acetyl-alpha-D-glucosaminyl-1-phospho)-alpha-D-mannosyl-(1-&gt;2)-alpha-D-mannosyl-(glycan)]-L-asparaginyl-[protein] + UMP + H(+). Catalyzes the formation of mannose 6-phosphate (M6P) markers on high mannose type oligosaccharides in the Golgi apparatus. M6P residues are required to bind to the M6P receptors (MPR), which mediate the vesicular transport of lysosomal enzymes to the endosomal/prelysosomal compartment. The protein is N-acetylglucosamine-1-phosphotransferase subunits alpha/beta (GNPTAB) of Homo sapiens (Human).